Here is a 218-residue protein sequence, read N- to C-terminus: Mitochondrial fission factor (218 aa).

Residues 1 to 198 lie on the Cytoplasmic side of the membrane; that stretch reads MAEISRIQYE…ENKERAKREM (198 aa). T89 bears the Phosphothreonine mark. 4 positions are modified to phosphoserine: S129, S131, S146, and S171. The stretch at 167–198 forms a coiled coil; that stretch reads VDAASLRRQIIKLNRRLQLLEEENKERAKREM. A helical; Anchor for type IV membrane protein membrane pass occupies residues 199 to 216; it reads VMYSITVAFWLLNSWLWF. The Mitochondrial intermembrane portion of the chain corresponds to 217-218; the sequence is RR.

Belongs to the Tango11 family. As to quaternary structure, homodimer. Interacts with DNM1L. Interacts with C11orf65/MFI; the interaction inhibits MFF interaction with DNM1L.

Its subcellular location is the mitochondrion outer membrane. It localises to the peroxisome. The protein resides in the cytoplasmic vesicle. The protein localises to the secretory vesicle. It is found in the synaptic vesicle. Its function is as follows. Plays a role in mitochondrial and peroxisomal fission. Promotes the recruitment and association of the fission mediator dynamin-related protein 1 (DNM1L) to the mitochondrial surface. May be involved in regulation of synaptic vesicle membrane dynamics by recruitment of DNM1L to clathrin-containing vesicles. The protein is Mitochondrial fission factor (MFF) of Pongo abelii (Sumatran orangutan).